The chain runs to 618 residues: Grainyhead-like protein 1 homolog (618 aa).

A transcription activation region spans residues 1 to 91; it reads MTQEYDNKRP…EGEHPEPEHS (91 aa). Over residues 76 to 92 the composition is skewed to basic and acidic residues; sequence SSAVKPEGEHPEPEHSK. The interval 76–100 is disordered; sequence SSAVKPEGEHPEPEHSKRNSIPNVT. Position 208 is a phosphothreonine (Thr208). Residues 248-474 enclose the Grh/CP2 DB domain; it reads SGNNFEYTLE…DLDTQPVLFI (227 aa). Interaction with DNA regions lie at residues 380 to 389 and 427 to 430; these read TDFSSQKGVK and RKIR.

This sequence belongs to the grh/CP2 family. Grainyhead subfamily. Binds DNA as homodimer. Homodimer, also forms heterodimers with GRHL2 or GRHL3. In terms of processing, methylation at Arg-9 and Lys-116 may be involved in regulating transcriptional activation. In terms of tissue distribution, isoform 1 is highly expressed in brain, pancreas, tonsil, placenta and kidney. Isoform 2 is highly expressed in brain and liver. Expression in the skin is confined to the suprabasal layers of the epidermis and to the hair follicles.

It localises to the nucleus. In terms of biological role, transcription factor involved in epithelial development. Binds directly to the consensus DNA sequence 5'-AACCGGTT-3'. Important regulator of DSG1 in the context of hair anchorage and epidermal differentiation, participates in the maintenance of the skin barrier. There is no genetic interaction with GRHL3, nor functional cooperativity due to diverse target gene selectivity during epithelia development. May play a role in regulating glucose homeostasis and insulin signaling. This Mus musculus (Mouse) protein is Grainyhead-like protein 1 homolog.